The chain runs to 356 residues: Probable dual-specificity RNA methyltransferase RlmN (356 aa).

Glu92 (proton acceptor) is an active-site residue. Positions 98–336 (HKYGFSVCVT…CGVRLEHGTD (239 aa)) constitute a Radical SAM core domain. Residues Cys105 and Cys341 are joined by a disulfide bond. [4Fe-4S] cluster is bound by residues Cys112, Cys116, and Cys119. S-adenosyl-L-methionine-binding positions include 164–165 (GE), Ser196, 219–221 (SLH), and Asn297. Cys341 serves as the catalytic S-methylcysteine intermediate.

The protein belongs to the radical SAM superfamily. RlmN family. The cofactor is [4Fe-4S] cluster.

Its subcellular location is the cytoplasm. The enzyme catalyses adenosine(2503) in 23S rRNA + 2 reduced [2Fe-2S]-[ferredoxin] + 2 S-adenosyl-L-methionine = 2-methyladenosine(2503) in 23S rRNA + 5'-deoxyadenosine + L-methionine + 2 oxidized [2Fe-2S]-[ferredoxin] + S-adenosyl-L-homocysteine. The catalysed reaction is adenosine(37) in tRNA + 2 reduced [2Fe-2S]-[ferredoxin] + 2 S-adenosyl-L-methionine = 2-methyladenosine(37) in tRNA + 5'-deoxyadenosine + L-methionine + 2 oxidized [2Fe-2S]-[ferredoxin] + S-adenosyl-L-homocysteine. Specifically methylates position 2 of adenine 2503 in 23S rRNA and position 2 of adenine 37 in tRNAs. The chain is Probable dual-specificity RNA methyltransferase RlmN from Shouchella clausii (strain KSM-K16) (Alkalihalobacillus clausii).